Consider the following 80-residue polypeptide: Conotoxin Cl11.2 (80 aa).

Positions 1-19 (MKMSVTFLLILMILPLFTG) are cleaved as a signal peptide. Residues 20–41 (EWQSGSRLSALKKRLLEKRLLQ) constitute a propeptide that is removed on maturation. 4 disulfide bridges follow: Cys45-Cys59, Cys52-Cys63, Cys58-Cys68, and Cys62-Cys74.

It belongs to the conotoxin I1 superfamily. As to expression, expressed by the venom duct.

The protein resides in the secreted. This is Conotoxin Cl11.2 from Californiconus californicus (California cone).